We begin with the raw amino-acid sequence, 619 residues long: Chaperone protein HscA homolog (619 aa).

This sequence belongs to the heat shock protein 70 family.

Functionally, chaperone involved in the maturation of iron-sulfur cluster-containing proteins. Has a low intrinsic ATPase activity which is markedly stimulated by HscB. The polypeptide is Chaperone protein HscA homolog (Haemophilus influenzae (strain 86-028NP)).